Consider the following 505-residue polypeptide: ATP synthase subunit alpha (505 aa).

An ATP-binding site is contributed by 170-177; it reads GDRQTGKT.

It belongs to the ATPase alpha/beta chains family. F-type ATPases have 2 components, CF(1) - the catalytic core - and CF(0) - the membrane proton channel. CF(1) has five subunits: alpha(3), beta(3), gamma(1), delta(1), epsilon(1). CF(0) has four main subunits: a(1), b(1), b'(1) and c(9-12).

The protein localises to the cellular thylakoid membrane. It catalyses the reaction ATP + H2O + 4 H(+)(in) = ADP + phosphate + 5 H(+)(out). Functionally, produces ATP from ADP in the presence of a proton gradient across the membrane. The alpha chain is a regulatory subunit. In Trichodesmium erythraeum (strain IMS101), this protein is ATP synthase subunit alpha.